An 823-amino-acid chain; its full sequence is Valine--tRNA ligase (823 aa).

An ATP-binding site is contributed by Lys547.

It belongs to the class-I aminoacyl-tRNA synthetase family. ValS type 2 subfamily.

The protein localises to the cytoplasm. It carries out the reaction tRNA(Val) + L-valine + ATP = L-valyl-tRNA(Val) + AMP + diphosphate. Its function is as follows. Catalyzes the attachment of valine to tRNA(Val). As ValRS can inadvertently accommodate and process structurally similar amino acids such as threonine, to avoid such errors, it has a 'posttransfer' editing activity that hydrolyzes mischarged Thr-tRNA(Val) in a tRNA-dependent manner. The polypeptide is Valine--tRNA ligase (valS) (Aeropyrum pernix (strain ATCC 700893 / DSM 11879 / JCM 9820 / NBRC 100138 / K1)).